The sequence spans 111 residues: MSGDRPKRPLSAYMLWLNETREQIKKDNPGSKVTDIAKRGGELWRGLKDKTEWEQKAIKMKEEYNKAVKEYEANGGTDSGAPKKRKKAAAKPAKKAKKKESSEEEEEDESE.

Residues 6–72 constitute a DNA-binding region (HMG box); sequence PKRPLSAYML…EYNKAVKEYE (67 aa). S11 is modified (phosphoserine). Residues 72–111 are disordered; sequence EANGGTDSGAPKKRKKAAAKPAKKAKKKESSEEEEEDESE. The span at 82 to 98 shows a compositional bias: basic residues; the sequence is PKKRKKAAAKPAKKAKK. Residues 102 to 111 are compositionally biased toward acidic residues; that stretch reads SEEEEEDESE.

The protein belongs to the HMGB family.

It is found in the nucleus. Its subcellular location is the chromosome. The sequence is that of High mobility group protein Z (HmgZ) from Drosophila melanogaster (Fruit fly).